A 342-amino-acid polypeptide reads, in one-letter code: 4-hydroxy-2-oxovalerate aldolase (342 aa).

In terms of domain architecture, Pyruvate carboxyltransferase spans 7–257 (IWITEVALRD…KTGVDLYKMM (251 aa)). A substrate-binding site is contributed by 15-16 (RD). D16 lines the Mn(2+) pocket. The active-site Proton acceptor is the H19. Substrate is bound by residues S169 and H196. 2 residues coordinate Mn(2+): H196 and H198. Y287 is a binding site for substrate.

It belongs to the 4-hydroxy-2-oxovalerate aldolase family.

It carries out the reaction (S)-4-hydroxy-2-oxopentanoate = acetaldehyde + pyruvate. This is 4-hydroxy-2-oxovalerate aldolase (nbaI) from Geobacillus thermodenitrificans (strain NG80-2).